We begin with the raw amino-acid sequence, 487 residues long: UDP-N-acetylmuramate--L-alanine ligase (487 aa).

Position 129–135 (glycine 129–threonine 135) interacts with ATP.

It belongs to the MurCDEF family.

It is found in the cytoplasm. It catalyses the reaction UDP-N-acetyl-alpha-D-muramate + L-alanine + ATP = UDP-N-acetyl-alpha-D-muramoyl-L-alanine + ADP + phosphate + H(+). The protein operates within cell wall biogenesis; peptidoglycan biosynthesis. Functionally, cell wall formation. The chain is UDP-N-acetylmuramate--L-alanine ligase from Aliivibrio fischeri (strain ATCC 700601 / ES114) (Vibrio fischeri).